A 269-amino-acid polypeptide reads, in one-letter code: uncharacterized protein (269 aa).

Positions 1–21 are disordered; that stretch reads MAYSSSNSDIEDDSSKSNSNL.

This is an uncharacterized protein from Homo sapiens (Human).